The following is a 271-amino-acid chain: Undecaprenyl-diphosphatase (271 aa).

8 consecutive transmembrane segments (helical) span residues 5 to 25, 45 to 65, 86 to 106, 114 to 134, 149 to 169, 189 to 209, 226 to 246, and 251 to 271; these read YALFVAFVLGIVEGLTEFLPV, AATFEVVIQMGSILAVVAVFW, TLSLVHIILGMLPAVIIGLGI, LFGPETVMYALVAGGILLIIA, ISYKQAFGIGLFQCLALWPGF, AAEFSFILAVPMMVAASGLDL, VGFITAFVVAMIAIKTFLALI, and FIPFAIYRFIVAFAVYLVFVA.

It belongs to the UppP family.

The protein resides in the cell inner membrane. The enzyme catalyses di-trans,octa-cis-undecaprenyl diphosphate + H2O = di-trans,octa-cis-undecaprenyl phosphate + phosphate + H(+). Functionally, catalyzes the dephosphorylation of undecaprenyl diphosphate (UPP). Confers resistance to bacitracin. This is Undecaprenyl-diphosphatase from Aeromonas salmonicida (strain A449).